The chain runs to 213 residues: ATP synthase peripheral stalk subunit OSCP, mitochondrial (213 aa).

A mitochondrion-targeting transit peptide spans 1 to 23 (MAAPAVSGVSQQVRYFGTSVVRP). Residues 5-23 (AVSGVSQQVRYFGTSVVRP) carry the SIFI-degron motif. 4 positions are modified to N6-acetyllysine: K54, K60, K70, and K73. At K90 the chain carries N6-succinyllysine. N6-acetyllysine; alternate is present on residues K158 and K162. Residues K158 and K162 each carry the N6-succinyllysine; alternate modification. 3 positions are modified to N6-acetyllysine: K172, K176, and K192. Residue K199 is modified to N6-succinyllysine.

Belongs to the ATPase delta chain family. As to quaternary structure, component of the ATP synthase complex composed at least of ATP5F1A/subunit alpha, ATP5F1B/subunit beta, ATP5MC1/subunit c (homooctomer), MT-ATP6/subunit a, MT-ATP8/subunit 8, ATP5ME/subunit e, ATP5MF/subunit f, ATP5MG/subunit g, ATP5MK/subunit k, ATP5MJ/subunit j, ATP5F1C/subunit gamma, ATP5F1D/subunit delta, ATP5F1E/subunit epsilon, ATP5PF/subunit F6, ATP5PB/subunit b, ATP5PD/subunit d, ATP5PO/subunit OSCP. ATP synthase complex consists of a soluble F(1) head domain (subunits alpha(3) and beta(3)) - the catalytic core - and a membrane F(0) domain - the membrane proton channel (subunits c, a, 8, e, f, g, k and j). These two domains are linked by a central stalk (subunits gamma, delta, and epsilon) rotating inside the F1 region and a stationary peripheral stalk (subunits F6, b, d, and OSCP). In terms of processing, acetylation at Lys-162 decreases ATP production. Deacetylated by SIRT3. In response to mitochondrial stress, the precursor protein is ubiquitinated by the SIFI complex in the cytoplasm before mitochondrial import, leading to its degradation. Within the SIFI complex, UBR4 initiates ubiquitin chain that are further elongated or branched by KCMF1.

It is found in the mitochondrion. The protein localises to the mitochondrion inner membrane. In terms of biological role, subunit OSCP, of the mitochondrial membrane ATP synthase complex (F(1)F(0) ATP synthase or Complex V) that produces ATP from ADP in the presence of a proton gradient across the membrane which is generated by electron transport complexes of the respiratory chain. ATP synthase complex consist of a soluble F(1) head domain - the catalytic core - and a membrane F(1) domain - the membrane proton channel. These two domains are linked by a central stalk rotating inside the F(1) region and a stationary peripheral stalk. During catalysis, ATP synthesis in the catalytic domain of F(1) is coupled via a rotary mechanism of the central stalk subunits to proton translocation. In vivo, can only synthesize ATP although its ATP hydrolase activity can be activated artificially in vitro. Part of the complex F(0) domain. Part of the complex F(0) domain and the peripheric stalk, which acts as a stator to hold the catalytic alpha(3)beta(3) subcomplex and subunit a/ATP6 static relative to the rotary elements. This Callithrix jacchus (White-tufted-ear marmoset) protein is ATP synthase peripheral stalk subunit OSCP, mitochondrial.